The following is an 88-amino-acid chain: Protein WIR1A (88 aa).

Topologically, residues 1-13 (MASLGSSAGGRRP) are cytoplasmic. Residues 14 to 35 (TVLLQIALFVVVAAIIINSSVC) form a helical membrane-spanning segment. Topologically, residues 36–88 (LGATAVHDAAASGTGALDPNVPAVPTPGGAGQPYTGRGCRTVYGCRPPAGGQP) are extracellular.

It is found in the membrane. In terms of biological role, associated with pathogen defense. The polypeptide is Protein WIR1A (WIR1A) (Triticum aestivum (Wheat)).